The chain runs to 678 residues: uncharacterized protein (678 aa).

Transmembrane regions (helical) follow at residues 14-34 and 180-200; these read LMFAGAGPGPMLAAASAWTGL and GAVIIAGFPFLDLGNVTIGGF.

The protein belongs to the mycobacterial PPE family.

It is found in the cell membrane. This is an uncharacterized protein from Mycobacterium tuberculosis (strain CDC 1551 / Oshkosh).